A 721-amino-acid chain; its full sequence is Dolichyl-diphosphooligosaccharide--protein glycosyltransferase subunit STT3B (721 aa).

The Cytoplasmic segment spans residues 1 to 25 (MAAATALDSLPAPLRSLRLKTKQQE). The chain crosses the membrane as a helical span at residues 26–46 (LLLRVSALALIYVLAFVVRLF). Topologically, residues 47–129 (SVLRYESMIH…VHIREVCVLT (83 aa)) are lumenal. Positions 57-59 (EFD) match the DXD motif 1 motif. Position 59 (Asp-59) interacts with Mn(2+). The helical transmembrane segment at 130-148 (APFFAANTTLVAYAFGREI) threads the bilayer. The Cytoplasmic segment spans residues 149–150 (WD). The helical transmembrane segment at 151 to 168 (SGAGLVAAALIAVCPGYI) threads the bilayer. At 169–179 (SRSVAGSYDNE) the chain is on the lumenal side. Asp-177 and Glu-179 together coordinate Mn(2+). The DXD motif 2 signature appears at 177 to 179 (DNE). The chain crosses the membrane as a helical span at residues 180 to 199 (GVAIFALLLTFYLFVRAVNT). Topologically, residues 200-201 (GS) are cytoplasmic. A helical transmembrane segment spans residues 202–216 (LAWSLASAFGYFYMV). Over 217-221 (SAWGG) the chain is Lumenal. The chain crosses the membrane as a helical span at residues 222–238 (YVFIINLLPLYVLVLLV). The Cytoplasmic segment spans residues 239–243 (TGRYS). Residues 244-269 (QRLYVAYNSTYVLGMLLAMQIRFVGF) traverse the membrane as a helical segment. The Lumenal portion of the chain corresponds to 270 to 277 (QHVQSGEH). The helical transmembrane segment at 278-297 (MAAMGVFFLLQVFFFLDWVK) threads the bilayer. Residues 298–313 (YLLNDAKLFKSFLRIT) are Cytoplasmic-facing. The helical transmembrane segment at 314-334 (LTCVITVGTLALGIGTASGYI) threads the bilayer. Residues 335-367 (SPWTGRFYSLLDPTYAKDHIPIIASVSEHQPTA) are Lumenal-facing. The SVSE motif motif lies at 359 to 362 (SVSE). Residues 368 to 390 (WSSFMFDFHILLFLFPAGLYFCF) traverse the membrane as a helical segment. At 391-396 (KRLSDA) the chain is on the cytoplasmic side. Residues 397–413 (TIFIVMYGLTSMYFAGV) form a helical membrane-spanning segment. At 414–417 (MVRL) the chain is on the lumenal side. Arg-416 serves as a coordination point for dolichyl diphosphooligosaccharide. Residues 418–439 (ILVAAPAVCLISAIAASATIKN) form a helical membrane-spanning segment. The Cytoplasmic portion of the chain corresponds to 440–471 (LTTLIRTKSKSPQTVSGKSSGSKAAAKGAVDQ). The chain crosses the membrane as a helical span at residues 472-492 (SLPFQQNVAIALLLGAFYLLS). The Lumenal segment spans residues 493-721 (RYAVHCTWVT…YKVKPPKNRS (229 aa)). Residues 548-550 (WWD) form an interacts with target acceptor peptide in protein substrate region. Positions 548–552 (WWDYG) match the WWDYG motif motif. Tyr-553 is a binding site for dolichyl diphosphooligosaccharide. N-linked (GlcNAc...) asparagine glycans are attached at residues Asn-560 and Asn-567. N-linked (GlcNAc...) (high mannose) asparagine glycosylation occurs at Asn-571. A DK motif motif is present at residues 615-622 (DINKFLWM).

Belongs to the STT3 family. In terms of assembly, component of the oligosaccharyltransferase (OST) complex. The cofactor is Mg(2+). Requires Mn(2+) as cofactor.

The protein localises to the endoplasmic reticulum membrane. The catalysed reaction is a di-trans,poly-cis-dolichyl diphosphooligosaccharide + L-asparaginyl-[protein] = N(4)-(oligosaccharide-(1-&gt;4)-N-acetyl-beta-D-glucosaminyl-(1-&gt;4)-N-acetyl-beta-D-glucosaminyl)-L-asparaginyl-[protein] + a di-trans,poly-cis-dolichyl diphosphate + H(+). Its pathway is protein modification; protein glycosylation. Catalytic subunit of the oligosaccharyl transferase (OST) complex that catalyzes the initial transfer of a defined glycan (Glc(3)Man(9)GlcNAc(2) in eukaryotes) from the lipid carrier dolichol-pyrophosphate to an asparagine residue within an Asn-X-Ser/Thr consensus motif in nascent polypeptide chains, the first step in protein N-glycosylation. N-glycosylation occurs cotranslationally and the complex associates with the Sec61 complex at the channel-forming translocon complex that mediates protein translocation across the endoplasmic reticulum (ER). All subunits are required for a maximal enzyme activity. This subunit contains the active site and the acceptor peptide and donor lipid-linked oligosaccharide (LLO) binding pockets. In Oryza sativa subsp. japonica (Rice), this protein is Dolichyl-diphosphooligosaccharide--protein glycosyltransferase subunit STT3B (STT3B).